Here is a 496-residue protein sequence, read N- to C-terminus: UDP-N-acetylmuramoyl-L-alanyl-D-glutamate--2,6-diaminopimelate ligase (496 aa).

UDP-N-acetyl-alpha-D-muramoyl-L-alanyl-D-glutamate-binding residues include L24 and S26. 109–115 (GTNGKTS) serves as a coordination point for ATP. UDP-N-acetyl-alpha-D-muramoyl-L-alanyl-D-glutamate-binding positions include 151 to 152 (TT), S178, Q184, and R186. Residue K218 is modified to N6-carboxylysine. Meso-2,6-diaminopimelate-binding positions include R387, 411 to 414 (DNPR), G462, and E466. A Meso-diaminopimelate recognition motif motif is present at residues 411 to 414 (DNPR).

This sequence belongs to the MurCDEF family. MurE subfamily. Mg(2+) is required as a cofactor. In terms of processing, carboxylation is probably crucial for Mg(2+) binding and, consequently, for the gamma-phosphate positioning of ATP.

It localises to the cytoplasm. The catalysed reaction is UDP-N-acetyl-alpha-D-muramoyl-L-alanyl-D-glutamate + meso-2,6-diaminopimelate + ATP = UDP-N-acetyl-alpha-D-muramoyl-L-alanyl-gamma-D-glutamyl-meso-2,6-diaminopimelate + ADP + phosphate + H(+). It participates in cell wall biogenesis; peptidoglycan biosynthesis. Functionally, catalyzes the addition of meso-diaminopimelic acid to the nucleotide precursor UDP-N-acetylmuramoyl-L-alanyl-D-glutamate (UMAG) in the biosynthesis of bacterial cell-wall peptidoglycan. The polypeptide is UDP-N-acetylmuramoyl-L-alanyl-D-glutamate--2,6-diaminopimelate ligase (Pseudomonas putida (strain ATCC 47054 / DSM 6125 / CFBP 8728 / NCIMB 11950 / KT2440)).